The sequence spans 280 residues: MPELPEVETTRRKIEPLLRGKTIERIVHDAPHRYRNTERAHGRQVRGLTRRGKYLLLHLAAADAAEDEPHDLELIVHLGMTGGFRLEEGPHTRVTFELGSGEKLYFNDPRRFGKVVAVAPGDYASMPTLAAMGPEPLSDDFTEAEFVALAARCGPVKPWLLSQKPVSGVGNIYADESLWHARLHPAQTRLNADEAGRLYRAIREVMAAAVDKGGSSLGNGVGNYRQHDGEGGGFQHSHHVYGRAGQPCDRCGTPIEKIVLGQRGTHFCPVCQPLRTDRSA.

P2 acts as the Schiff-base intermediate with DNA in catalysis. The active-site Proton donor is the E3. K53 serves as the catalytic Proton donor; for beta-elimination activity. The DNA site is built by H91, R110, and R152. The segment at 239–273 (HVYGRAGQPCDRCGTPIEKIVLGQRGTHFCPVCQP) adopts an FPG-type zinc-finger fold. The active-site Proton donor; for delta-elimination activity is the R263.

Belongs to the FPG family. As to quaternary structure, monomer. Requires Zn(2+) as cofactor.

It carries out the reaction Hydrolysis of DNA containing ring-opened 7-methylguanine residues, releasing 2,6-diamino-4-hydroxy-5-(N-methyl)formamidopyrimidine.. It catalyses the reaction 2'-deoxyribonucleotide-(2'-deoxyribose 5'-phosphate)-2'-deoxyribonucleotide-DNA = a 3'-end 2'-deoxyribonucleotide-(2,3-dehydro-2,3-deoxyribose 5'-phosphate)-DNA + a 5'-end 5'-phospho-2'-deoxyribonucleoside-DNA + H(+). Functionally, involved in base excision repair of DNA damaged by oxidation or by mutagenic agents. Acts as a DNA glycosylase that recognizes and removes damaged bases. Has a preference for oxidized purines, such as 7,8-dihydro-8-oxoguanine (8-oxoG). Has AP (apurinic/apyrimidinic) lyase activity and introduces nicks in the DNA strand. Cleaves the DNA backbone by beta-delta elimination to generate a single-strand break at the site of the removed base with both 3'- and 5'-phosphates. This is Formamidopyrimidine-DNA glycosylase (mutM) from Deinococcus radiodurans (strain ATCC 13939 / DSM 20539 / JCM 16871 / CCUG 27074 / LMG 4051 / NBRC 15346 / NCIMB 9279 / VKM B-1422 / R1).